Here is a 250-residue protein sequence, read N- to C-terminus: tRNA-specific adenosine deaminase subunit TAD2 (250 aa).

Positions 1–119 constitute a CMP/dCMP-type deaminase domain; sequence MQHIKHMRTA…ERFGGNGTVL (119 aa). Histidine 54 lines the Zn(2+) pocket. The active-site Proton donor is glutamate 56. 2 residues coordinate Zn(2+): cysteine 88 and cysteine 91.

It belongs to the cytidine and deoxycytidylate deaminase family. ADAT2 subfamily. As to quaternary structure, heterodimer with TAD3. It depends on Zn(2+) as a cofactor.

The protein localises to the cytoplasm. It is found in the nucleus. It carries out the reaction adenosine(34) in tRNA + H2O + H(+) = inosine(34) in tRNA + NH4(+). Structural subunit of tRNA-specific adenosine deaminase, which deaminates adenosine-34 (the first, also called wobble position of the anticodon) to inosine in many tRNAs. Inosine-34 allows the decoding of 3 different nucleotides at the third position of mRNA codons, as inosine is able to pair with U, C, and A. This chain is tRNA-specific adenosine deaminase subunit TAD2 (TAD2), found in Saccharomyces cerevisiae (strain ATCC 204508 / S288c) (Baker's yeast).